The chain runs to 459 residues: tRNA(Ile2) 2-agmatinylcytidine synthetase TiaS (459 aa).

The OB DNA-binding region spans 282-360 (VRVRVWVASI…TINLEKLHII (79 aa)).

Belongs to the TiaS family.

The protein resides in the cytoplasm. It catalyses the reaction cytidine(34) in tRNA(Ile2) + agmatine + ATP + H2O = 2-agmatinylcytidine(34) in tRNA(Ile2) + AMP + 2 phosphate + 2 H(+). ATP-dependent agmatine transferase that catalyzes the formation of 2-agmatinylcytidine (agm2C) at the wobble position (C34) of tRNA(Ile2), converting the codon specificity from AUG to AUA. In Staphylothermus marinus (strain ATCC 43588 / DSM 3639 / JCM 9404 / F1), this protein is tRNA(Ile2) 2-agmatinylcytidine synthetase TiaS.